The chain runs to 244 residues: Probable ABC transporter ATP-binding protein p29 (244 aa).

The 236-residue stretch at 6–241 (LVFDQVSLRY…KLTKQKLMQI (236 aa)) folds into the ABC transporter domain. An ATP-binding site is contributed by 38–45 (GKSGVGKT).

This sequence belongs to the ABC transporter superfamily.

Part of a high-affinity transport system. The polypeptide is Probable ABC transporter ATP-binding protein p29 (p29) (Mycoplasma pneumoniae (strain ATCC 29342 / M129 / Subtype 1) (Mycoplasmoides pneumoniae)).